The chain runs to 201 residues: Small ribosomal subunit protein uS4 (201 aa).

An S4 RNA-binding domain is found at 91–157 (SRLDNVIYRA…VPFQIARETA (67 aa)).

The protein belongs to the universal ribosomal protein uS4 family. Part of the 30S ribosomal subunit. Contacts protein S5. The interaction surface between S4 and S5 is involved in control of translational fidelity.

Its function is as follows. One of the primary rRNA binding proteins, it binds directly to 16S rRNA where it nucleates assembly of the body of the 30S subunit. Functionally, with S5 and S12 plays an important role in translational accuracy. This is Small ribosomal subunit protein uS4 from Mycobacterium tuberculosis (strain ATCC 25177 / H37Ra).